The sequence spans 266 residues: UPF0328 protein ECU05_1610/ECU11_0120 (266 aa).

The protein belongs to the UPF0328 family.

This chain is UPF0328 protein ECU05_1610/ECU11_0120, found in Encephalitozoon cuniculi (strain GB-M1) (Microsporidian parasite).